The sequence spans 230 residues: 5'-methylthioadenosine/S-adenosylhomocysteine nucleosidase (230 aa).

E12 serves as the catalytic Proton acceptor. Substrate contacts are provided by residues G78, V152, and 173-174; that span reads ME. Residue D197 is the Proton donor of the active site.

The protein belongs to the PNP/UDP phosphorylase family. MtnN subfamily.

It catalyses the reaction S-adenosyl-L-homocysteine + H2O = S-(5-deoxy-D-ribos-5-yl)-L-homocysteine + adenine. It carries out the reaction S-methyl-5'-thioadenosine + H2O = 5-(methylsulfanyl)-D-ribose + adenine. The catalysed reaction is 5'-deoxyadenosine + H2O = 5-deoxy-D-ribose + adenine. It functions in the pathway amino-acid biosynthesis; L-methionine biosynthesis via salvage pathway; S-methyl-5-thio-alpha-D-ribose 1-phosphate from S-methyl-5'-thioadenosine (hydrolase route): step 1/2. Functionally, catalyzes the irreversible cleavage of the glycosidic bond in both 5'-methylthioadenosine (MTA) and S-adenosylhomocysteine (SAH/AdoHcy) to adenine and the corresponding thioribose, 5'-methylthioribose and S-ribosylhomocysteine, respectively. Also cleaves 5'-deoxyadenosine, a toxic by-product of radical S-adenosylmethionine (SAM) enzymes, into 5-deoxyribose and adenine. This is 5'-methylthioadenosine/S-adenosylhomocysteine nucleosidase from Glaesserella parasuis serovar 5 (strain SH0165) (Haemophilus parasuis).